A 148-amino-acid polypeptide reads, in one-letter code: Large ribosomal subunit protein uL15 (148 aa).

A disordered region spans residues 12–52 (ERKNRKRVGRGGGSGWGGTSGKGHKGQNARSGGGVPAWFEG). The span at 21–32 (RGGGSGWGGTSG) shows a compositional bias: gly residues.

Belongs to the universal ribosomal protein uL15 family. Part of the 50S ribosomal subunit.

Binds to the 23S rRNA. The polypeptide is Large ribosomal subunit protein uL15 (Maridesulfovibrio salexigens (strain ATCC 14822 / DSM 2638 / NCIMB 8403 / VKM B-1763) (Desulfovibrio salexigens)).